The primary structure comprises 331 residues: Cytosolic 5'-nucleotidase 3A (331 aa).

D83 functions as the Nucleophile in the catalytic mechanism. Mg(2+) is bound by residues D83 and D85. The active-site Proton donor is the D85. Residue E130 coordinates CMP. 2 residues coordinate N(7)-methyl-GMP: E130 and S151. Substrate is bound by residues 198–199 (SA) and K247. D272 lines the Mg(2+) pocket.

The protein belongs to the pyrimidine 5'-nucleotidase family.

It localises to the cytoplasm. It carries out the reaction N(7)-methyl-GMP + H2O = N(7)-methylguanosine + phosphate. The catalysed reaction is a ribonucleoside 5'-phosphate + H2O = a ribonucleoside + phosphate. Its function is as follows. Nucleotidase which shows specific activity towards cytidine monophosphate (CMP) and 7-methylguanosine monophosphate (m(7)GMP). CMP seems to be the preferred substrate. The polypeptide is Cytosolic 5'-nucleotidase 3A (NT5C3A) (Gallus gallus (Chicken)).